The primary structure comprises 42 residues: Cytochrome b559 subunit beta (42 aa).

The helical transmembrane segment at 17–33 (WLSIHALAVPTVFFLGA) threads the bilayer. Histidine 21 is a heme binding site.

This sequence belongs to the PsbE/PsbF family. Heterodimer of an alpha subunit and a beta subunit. PSII is composed of 1 copy each of membrane proteins PsbA, PsbB, PsbC, PsbD, PsbE, PsbF, PsbH, PsbI, PsbJ, PsbK, PsbL, PsbM, PsbT, PsbX, PsbY, PsbZ, Psb30/Ycf12, at least 3 peripheral proteins of the oxygen-evolving complex and a large number of cofactors. It forms dimeric complexes. Heme b serves as cofactor.

It localises to the plastid. The protein localises to the chloroplast thylakoid membrane. This b-type cytochrome is tightly associated with the reaction center of photosystem II (PSII). PSII is a light-driven water:plastoquinone oxidoreductase that uses light energy to abstract electrons from H(2)O, generating O(2) and a proton gradient subsequently used for ATP formation. It consists of a core antenna complex that captures photons, and an electron transfer chain that converts photonic excitation into a charge separation. This Tupiella akineta (Green alga) protein is Cytochrome b559 subunit beta.